The primary structure comprises 342 residues: Replication factor C subunit 3 (342 aa).

63-70 contributes to the ATP binding site; that stretch reads GPPGTGKT.

It belongs to the activator 1 small subunits family. As to quaternary structure, heteropentamer of subunits rfc1, rfc2, rfc3, rfc4 and rfc5 that forms a complex (RFC) with PCNA in the presence of ATP. Two other complexes exist where rfc1 can be replaced by either ctf18 or elg1 to form the ctf18-RFC or the elg1-RFC complexes respectively.

The protein resides in the nucleus. The elongation of primed DNA templates by DNA polymerase delta and epsilon requires the action of the accessory proteins PCNA and activator 1. Subunit 3 binds ATP. Also involved in replication and DNA damage checkpoint controls, probably functioning as a checkpoint sensor. The sequence is that of Replication factor C subunit 3 (rfc3) from Schizosaccharomyces pombe (strain 972 / ATCC 24843) (Fission yeast).